A 204-amino-acid polypeptide reads, in one-letter code: Holliday junction branch migration complex subunit RuvA (204 aa).

The segment at 1–64 is domain I; that stretch reads MIGHLTGRLV…EDAHLLFGFS (64 aa). Residues 65 to 143 are domain II; it reads QKTDRTLFRE…GIQQEDFFIE (79 aa). The tract at residues 144-155 is flexible linker; the sequence is SQHLKQPEHALN. The domain III stretch occupies residues 156 to 204; sequence EQDIPASEAISALIALGYKAAEAEKLVKKISKPALSSEQLIREALKAAL.

The protein belongs to the RuvA family. In terms of assembly, homotetramer. Forms an RuvA(8)-RuvB(12)-Holliday junction (HJ) complex. HJ DNA is sandwiched between 2 RuvA tetramers; dsDNA enters through RuvA and exits via RuvB. An RuvB hexamer assembles on each DNA strand where it exits the tetramer. Each RuvB hexamer is contacted by two RuvA subunits (via domain III) on 2 adjacent RuvB subunits; this complex drives branch migration. In the full resolvosome a probable DNA-RuvA(4)-RuvB(12)-RuvC(2) complex forms which resolves the HJ.

Its subcellular location is the cytoplasm. Functionally, the RuvA-RuvB-RuvC complex processes Holliday junction (HJ) DNA during genetic recombination and DNA repair, while the RuvA-RuvB complex plays an important role in the rescue of blocked DNA replication forks via replication fork reversal (RFR). RuvA specifically binds to HJ cruciform DNA, conferring on it an open structure. The RuvB hexamer acts as an ATP-dependent pump, pulling dsDNA into and through the RuvAB complex. HJ branch migration allows RuvC to scan DNA until it finds its consensus sequence, where it cleaves and resolves the cruciform DNA. The polypeptide is Holliday junction branch migration complex subunit RuvA (Pasteurella multocida (strain Pm70)).